The chain runs to 265 residues: uncharacterized protein (265 aa).

E47 is a catalytic residue.

The protein belongs to the PhzF family.

This is an uncharacterized protein from Halalkalibacterium halodurans (strain ATCC BAA-125 / DSM 18197 / FERM 7344 / JCM 9153 / C-125) (Bacillus halodurans).